We begin with the raw amino-acid sequence, 116 residues long: Flagellar transcriptional regulator FlhD (116 aa).

The protein belongs to the FlhD family. In terms of assembly, homodimer; disulfide-linked. Forms a heterohexamer composed of two FlhC and four FlhD subunits. Each FlhC binds a FlhD dimer, forming a heterotrimer, and a hexamer assembles by dimerization of two heterotrimers.

It is found in the cytoplasm. Its function is as follows. Functions in complex with FlhC as a master transcriptional regulator that regulates transcription of several flagellar and non-flagellar operons by binding to their promoter region. Activates expression of class 2 flagellar genes, including fliA, which is a flagellum-specific sigma factor that turns on the class 3 genes. Also regulates genes whose products function in a variety of physiological pathways. The sequence is that of Flagellar transcriptional regulator FlhD from Escherichia coli O9:H4 (strain HS).